We begin with the raw amino-acid sequence, 234 residues long: Leucyl/phenylalanyl-tRNA--protein transferase (234 aa).

This sequence belongs to the L/F-transferase family.

Its subcellular location is the cytoplasm. The enzyme catalyses N-terminal L-lysyl-[protein] + L-leucyl-tRNA(Leu) = N-terminal L-leucyl-L-lysyl-[protein] + tRNA(Leu) + H(+). The catalysed reaction is N-terminal L-arginyl-[protein] + L-leucyl-tRNA(Leu) = N-terminal L-leucyl-L-arginyl-[protein] + tRNA(Leu) + H(+). It catalyses the reaction L-phenylalanyl-tRNA(Phe) + an N-terminal L-alpha-aminoacyl-[protein] = an N-terminal L-phenylalanyl-L-alpha-aminoacyl-[protein] + tRNA(Phe). Functionally, functions in the N-end rule pathway of protein degradation where it conjugates Leu, Phe and, less efficiently, Met from aminoacyl-tRNAs to the N-termini of proteins containing an N-terminal arginine or lysine. This chain is Leucyl/phenylalanyl-tRNA--protein transferase, found in Pseudoalteromonas atlantica (strain T6c / ATCC BAA-1087).